A 208-amino-acid chain; its full sequence is MRLWFCLSFFIVLCLEHFPETLADERNVPESEEKTEQYLRDLPKINRKGPRPPGFSPFRGKFHSQSLRDLPKINRKGPRPPGFSPFRGKFHSQSLRDLPKINRKGPRPPGFSPFRGKFHSQSLRDLPKINRKGPRPPGFSPFRGKFHSQSLRDLPKINRKGPRPPGFSPFRGKFHSQSLRDLPKINRKGPRPPGFSPFRGKFHSQSHV.

Positions methionine 1–alanine 23 are cleaved as a signal peptide. Residues asparagine 27–lysine 44 show a composition bias toward basic and acidic residues. The interval asparagine 27–valine 208 is disordered.

This sequence belongs to the bradykinin-related peptide family. In terms of tissue distribution, expressed by the skin glands.

The protein resides in the secreted. In terms of biological role, in vitro, produces constriction of guinea pig ileum smooth muscle. May target bradykinin receptors (BDKRB). This chain is Kininogen-1b, found in Bombina maxima (Giant fire-bellied toad).